Consider the following 270-residue polypeptide: Ribosomal RNA small subunit methyltransferase A (270 aa).

6 residues coordinate S-adenosyl-L-methionine: Asn18, Leu20, Gly45, Glu66, Asp91, and Asn112.

Belongs to the class I-like SAM-binding methyltransferase superfamily. rRNA adenine N(6)-methyltransferase family. RsmA subfamily.

It localises to the cytoplasm. The enzyme catalyses adenosine(1518)/adenosine(1519) in 16S rRNA + 4 S-adenosyl-L-methionine = N(6)-dimethyladenosine(1518)/N(6)-dimethyladenosine(1519) in 16S rRNA + 4 S-adenosyl-L-homocysteine + 4 H(+). Its function is as follows. Specifically dimethylates two adjacent adenosines (A1518 and A1519) in the loop of a conserved hairpin near the 3'-end of 16S rRNA in the 30S particle. May play a critical role in biogenesis of 30S subunits. In Psychromonas ingrahamii (strain DSM 17664 / CCUG 51855 / 37), this protein is Ribosomal RNA small subunit methyltransferase A.